An 888-amino-acid polypeptide reads, in one-letter code: MSGVNEIRSTFLDYFRKEGHEVVASSPLVPRNDPTLMFTNAGMVQFKNVFTGLEKRSYSRATTAQKSVRAGGKHNDLDNVGYTARHLTFFEMLGNFSFGDYFKERAIELAWNLITKEFGLKKDKLLVTVYHTDDEAAGFWKKIAGFSDDRIIRIATSDNFWAMGDTGPCGPCSEIFIDRGEHVWGGPPGSPEEDGDRFLEFWNLVFMQYEQVTKEERIDLPRPSIDTGMGLERMASILQGVESVFETDLFRHLIDAASSALGRAPDAETVASYRVIADHLRSSSFLVADGVLPSNEGRGYVLRRIMRRAMRHAQLLGANEPLMWKLVPALVREMGQAYPELLRGEQLVTETLKLEETRFRKTLVRGLGLLSEATETLHAGDMLDGETAFKLYDTYGFPLDLTQDALRQRNISVDLAGFTNAMEQQKAEARKHWTGSGEAATETVWFSVREQTGATEFLGYETEQAEGLIQALVKDGKTVDSAGKGDAVAVVVNQTPFYGESGGQMGDTGIISGEGFSIEISDTQKKADGLFVHLGKVASGTVKTGAAVELKVDHARRTRLRANHSATHLIHEALREVLGTHVAQKGSLVAPERLRFDISHNKPISAEELEEVERMANEIVVQNSPVTTRLMSVDDAIAEGAMALFGEKYGDEVRVVSMGTGLHGAKANRPYSVELCGGTHVRATGDIGLVRVVSDSAVAAGVRRIEALTGEAARKHLDEQDRRLKAAAATLKISPADVPARVEALLEERKKLEKDLTEARKKLALGGGAAAGAPSENETVAGVGFLGKAVSGVSPKDLKPLADAGKSSLGSGVVVFVGADEDNKASVVVAVTDDLVGRFSAVDLVRVASAALGGQGGGGRPDMAQAGGPDASKANDAIAAVKAALEAA.

Positions 564, 568, 676, and 680 each coordinate Zn(2+).

Belongs to the class-II aminoacyl-tRNA synthetase family. Zn(2+) is required as a cofactor.

Its subcellular location is the cytoplasm. It catalyses the reaction tRNA(Ala) + L-alanine + ATP = L-alanyl-tRNA(Ala) + AMP + diphosphate. In terms of biological role, catalyzes the attachment of alanine to tRNA(Ala) in a two-step reaction: alanine is first activated by ATP to form Ala-AMP and then transferred to the acceptor end of tRNA(Ala). Also edits incorrectly charged Ser-tRNA(Ala) and Gly-tRNA(Ala) via its editing domain. This chain is Alanine--tRNA ligase, found in Mesorhizobium japonicum (strain LMG 29417 / CECT 9101 / MAFF 303099) (Mesorhizobium loti (strain MAFF 303099)).